A 303-amino-acid polypeptide reads, in one-letter code: Probable acetylxylan esterase A (303 aa).

The N-terminal stretch at 1–23 (MLSTHLLFLATTLLTSLFHPIAA) is a signal peptide. The active-site Charge relay system is the Ser-147. Asn-189 carries N-linked (GlcNAc...) asparagine glycosylation.

This sequence belongs to the carbohydrate esterase 1 (CE1) family. AxeA subfamily. In terms of assembly, monomer.

It is found in the secreted. It carries out the reaction Deacetylation of xylans and xylo-oligosaccharides.. It participates in glycan degradation; xylan degradation. Acetylxylan esterase involved in the hydrolysis of xylan, a major structural heterogeneous polysaccharide found in plant biomass representing the second most abundant polysaccharide in the biosphere, after cellulose. Degrades acetylated xylans by cleaving acetyl side groups from the hetero-xylan backbone. The sequence is that of Probable acetylxylan esterase A (axeA) from Aspergillus niger (strain ATCC MYA-4892 / CBS 513.88 / FGSC A1513).